The primary structure comprises 384 residues: Cell division protein FtsZ (384 aa).

Residues 20–24, 107–109, Glu138, Arg142, and Asn186 contribute to the GTP site; these read GGGGN and GTG.

Belongs to the FtsZ family. Homodimer. Polymerizes to form a dynamic ring structure in a strictly GTP-dependent manner. Interacts directly with several other division proteins.

It is found in the cytoplasm. Functionally, essential cell division protein that forms a contractile ring structure (Z ring) at the future cell division site. The regulation of the ring assembly controls the timing and the location of cell division. One of the functions of the FtsZ ring is to recruit other cell division proteins to the septum to produce a new cell wall between the dividing cells. Binds GTP and shows GTPase activity. The chain is Cell division protein FtsZ from Wigglesworthia glossinidia brevipalpis.